Reading from the N-terminus, the 280-residue chain is Shikimate dehydrogenase (NADP(+)) (280 aa).

Residues 18-20 (SRS) and T65 each bind shikimate. The active-site Proton acceptor is K69. N90 and D105 together coordinate shikimate. Residues 131-135 (GAGGA), 154-159 (NRTRAR), and I219 contribute to the NADP(+) site. Y221 is a binding site for shikimate. G242 serves as a coordination point for NADP(+).

It belongs to the shikimate dehydrogenase family. As to quaternary structure, homodimer.

The enzyme catalyses shikimate + NADP(+) = 3-dehydroshikimate + NADPH + H(+). Its pathway is metabolic intermediate biosynthesis; chorismate biosynthesis; chorismate from D-erythrose 4-phosphate and phosphoenolpyruvate: step 4/7. Involved in the biosynthesis of the chorismate, which leads to the biosynthesis of aromatic amino acids. Catalyzes the reversible NADPH linked reduction of 3-dehydroshikimate (DHSA) to yield shikimate (SA). The protein is Shikimate dehydrogenase (NADP(+)) of Methylocella silvestris (strain DSM 15510 / CIP 108128 / LMG 27833 / NCIMB 13906 / BL2).